Here is a 166-residue protein sequence, read N- to C-terminus: Stress response protein NhaX (166 aa).

This sequence belongs to the universal stress protein A family.

This chain is Stress response protein NhaX (nhaX), found in Bacillus subtilis (strain 168).